A 145-amino-acid chain; its full sequence is Cystin-1 (145 aa).

A disordered region spans residues 1–129 (MGSGSSRSGR…PEGQSAISYD (129 aa)). Residue Gly-2 is the site of N-myristoyl glycine attachment. A Ciliary targeting motif motif is present at residues 29 to 33 (ASEGG). Ser-116 carries the post-translational modification Phosphoserine.

In terms of assembly, interacts (when myristoylated) with UNC119 and UNC119B; interaction is required for localization to cilium. As to expression, expressed primarily in the kidney and liver. Expressed at lower levels in the lung, brain and heart.

Its subcellular location is the cell projection. It localises to the cilium membrane. It is found in the cytoplasm. The protein resides in the cytoskeleton. The protein localises to the cilium axoneme. In Mus musculus (Mouse), this protein is Cystin-1 (Cys1).